Reading from the N-terminus, the 325-residue chain is Putative ankyrin repeat protein RF_0011 (325 aa).

ANK repeat units follow at residues 63-94, 99-130, and 134-164; these read NGNT…AINM, RGQP…NINA, and CGRT…EMII.

In Rickettsia felis (strain ATCC VR-1525 / URRWXCal2) (Rickettsia azadi), this protein is Putative ankyrin repeat protein RF_0011.